Reading from the N-terminus, the 376-residue chain is Erythronate-4-phosphate dehydrogenase (376 aa).

Residues S45 and T67 each coordinate substrate. Residue D147 coordinates NAD(+). Residue R209 is part of the active site. D233 provides a ligand contact to NAD(+). The active site involves E238. The Proton donor role is filled by H255. NAD(+) is bound at residue G258. Position 259 (Y259) interacts with substrate.

Belongs to the D-isomer specific 2-hydroxyacid dehydrogenase family. PdxB subfamily. Homodimer.

It localises to the cytoplasm. The catalysed reaction is 4-phospho-D-erythronate + NAD(+) = (R)-3-hydroxy-2-oxo-4-phosphooxybutanoate + NADH + H(+). It participates in cofactor biosynthesis; pyridoxine 5'-phosphate biosynthesis; pyridoxine 5'-phosphate from D-erythrose 4-phosphate: step 2/5. In terms of biological role, catalyzes the oxidation of erythronate-4-phosphate to 3-hydroxy-2-oxo-4-phosphonooxybutanoate. This Shewanella sp. (strain W3-18-1) protein is Erythronate-4-phosphate dehydrogenase.